The following is a 284-amino-acid chain: Pantothenate synthetase (284 aa).

An ATP-binding site is contributed by M34–H41. The active-site Proton donor is H41. (R)-pantoate is bound at residue Q65. Q65 is a binding site for beta-alanine. G151–D154 serves as a coordination point for ATP. Residue Q157 coordinates (R)-pantoate. Residues L180 and M188 to R191 contribute to the ATP site.

This sequence belongs to the pantothenate synthetase family. As to quaternary structure, homodimer.

It is found in the cytoplasm. It catalyses the reaction (R)-pantoate + beta-alanine + ATP = (R)-pantothenate + AMP + diphosphate + H(+). The protein operates within cofactor biosynthesis; (R)-pantothenate biosynthesis; (R)-pantothenate from (R)-pantoate and beta-alanine: step 1/1. In terms of biological role, catalyzes the condensation of pantoate with beta-alanine in an ATP-dependent reaction via a pantoyl-adenylate intermediate. The polypeptide is Pantothenate synthetase (Paramagnetospirillum magneticum (strain ATCC 700264 / AMB-1) (Magnetospirillum magneticum)).